A 328-amino-acid chain; its full sequence is L-tyrosine isonitrile synthase (328 aa).

Belongs to the isocyanide synthase family. In terms of assembly, monomer in solution.

The catalysed reaction is D-ribulose 5-phosphate + L-tyrosine = (2S)-3-(4-hydroxyphenyl)-2-isocyanopropanoate + hydroxyacetone + formaldehyde + phosphate + H2O + H(+). Involved in the biosynthesis of paerucumarin, a cyclized isocyano derivative of tyrosine. Responsible for the synthesis of the isonitrile group on tyrosine using the C2 of ribulose 5-phosphate as the source of the carbon atom. The polypeptide is L-tyrosine isonitrile synthase (Pseudomonas aeruginosa (strain ATCC 15692 / DSM 22644 / CIP 104116 / JCM 14847 / LMG 12228 / 1C / PRS 101 / PAO1)).